The chain runs to 5571 residues: Polyketide synthase GfsB (5571 aa).

The segment at 1-27 (MSVPPPGATPSRTSRTKGLKDRPRMEN) is disordered. Residues 18 to 27 (GLKDRPRMEN) are compositionally biased toward basic and acidic residues. One can recognise a Ketosynthase family 3 (KS3) 1 domain in the interval 57 to 483 (QEPVAIIGMS…GTNAHVIIEQ (427 aa)). Module regions lie at residues 57-2148 (QEPV…RDTL), 2167-3728 (DEPL…GSQV), and 3746-5485 (DEPV…HTHL). Residues Cys-230, His-365, and His-405 each act as for beta-ketoacyl synthase 1 activity in the active site. A disordered region spans residues 485–518 (PAIEGTGLGDDAPPTAEHPEERTPADGGPAPQPV). The 316-residue stretch at 611–926 (FVFPGQGSQW…LRSLAEAYAH (316 aa)) folds into the Malonyl-CoA:ACP transacylase (MAT) 1 domain. Residues 976–1109 (HPLLAAATSL…GYLAVGAHEP (134 aa)) are N-terminal hotdog fold 1. A PKS/mFAS DH 1 domain is found at 976–1264 (HPLLAAATSL…LRPLATNQAP (289 aa)). Residue His-1008 is the Proton acceptor; for dehydratase activity 1 of the active site. Residues 1122–1264 (ATPLDVTDLY…LRPLATNQAP (143 aa)) are C-terminal hotdog fold 1. Residue Asp-1183 is the Proton donor; for dehydratase activity 1 of the active site. The Enoyl reductase (ER) domain occupies 1478-1777 (GTLDHLTLIP…QARHIGKIVL (300 aa)). The Ketoreductase (KR) 1 domain occupies 1787–1966 (GTVLVTGATG…TSLAWGLWEE (180 aa)). Residues 2073 to 2148 (RIVNDLVRDH…ELAAHLRDTL (76 aa)) enclose the Carrier 1 domain. Ser-2108 carries the O-(pantetheine 4'-phosphoryl)serine modification. Residues 2167-2593 (DEPLAVVAMS…GTNAHVILEQ (427 aa)) form the Ketosynthase family 3 (KS3) 2 domain. Active-site for beta-ketoacyl synthase 2 activity residues include Cys-2340, His-2475, and His-2515. One can recognise a Malonyl-CoA:ACP transacylase (MAT) 2 domain in the interval 2710–3016 (VFSGQGSQRP…AAVALQRGNR (307 aa)). One can recognise a Ketoreductase (KR) 2 domain in the interval 3373–3551 (GTVLVTGGTG…VSVAWGPWAE (179 aa)). The Carrier 2 domain maps to 3653–3728 (TALLDLVRGQ…ALAEYVGSQV (76 aa)). Ser-3688 bears the O-(pantetheine 4'-phosphoryl)serine mark. Residues 3746-4172 (DEPVAIIGMS…GTNAHVILEQ (427 aa)) form the Ketosynthase family 3 (KS3) 3 domain. Active-site for beta-ketoacyl synthase 3 activity residues include Cys-3919, His-4054, and His-4094. One can recognise a Malonyl-CoA:ACP transacylase (MAT) 3 domain in the interval 4279–4601 (FLFSGQGSQR…ATAHVNGVQP (323 aa)). Positions 4649–4774 (HPLLAGVVDL…GALTVAEAVD (126 aa)) are N-terminal hotdog fold 2. In terms of domain architecture, PKS/mFAS DH 2 spans 4649-4931 (HPLLAGVVDL…TRPIAAGQLA (283 aa)). Residue His-4681 is the Proton acceptor; for dehydratase activity 2 of the active site. A C-terminal hotdog fold 2 region spans residues 4787–4931 (AIEVELDDPY…TRPIAAGQLA (145 aa)). Catalysis depends on Asp-4848, which acts as the Proton donor; for dehydratase activity 2. Residues 5134 to 5306 (LLVTGASGVL…TSLSWGLWAE (173 aa)) form the Ketoreductase (KR) 3 domain. The 76-residue stretch at 5410–5485 (RMVLDLVRDR…ALARYLHTHL (76 aa)) folds into the Carrier 3 domain. Position 5445 is an O-(pantetheine 4'-phosphoryl)serine (Ser-5445).

Pantetheine 4'-phosphate is required as a cofactor.

It functions in the pathway antibiotic biosynthesis. Second protein in the synthesis of the 16-membered macrolide antibiotics FD-891 and FD-892. Composed of 3 modules. Modifies the product of GfsA by multiple rounds of addition of malonyl-CoA or methylmalonyl-CoA and other modifications to help generate the final products. In Streptomyces halstedii, this protein is Polyketide synthase GfsB.